The sequence spans 226 residues: Putative ABC transporter ATP-binding protein BH02760 (226 aa).

The region spanning 4–222 (IKFDKVTQVF…IPLVAIKEYI (219 aa)) is the ABC transporter domain. 35–42 (GANGSGKS) is an ATP binding site.

This sequence belongs to the ABC transporter superfamily.

Its subcellular location is the cell inner membrane. Functionally, probably part of an ABC transporter complex. Responsible for energy coupling to the transport system. The polypeptide is Putative ABC transporter ATP-binding protein BH02760 (Bartonella henselae (strain ATCC 49882 / DSM 28221 / CCUG 30454 / Houston 1) (Rochalimaea henselae)).